The following is a 123-amino-acid chain: Large ribosomal subunit protein uL29 (123 aa).

The protein belongs to the universal ribosomal protein uL29 family.

The polypeptide is Large ribosomal subunit protein uL29 (rpl-35) (Caenorhabditis elegans).